A 4924-amino-acid polypeptide reads, in one-letter code: MKNSNEEDAFSTQISQLGPMRPSSDAPYHVLSLPFSHPYSAFLDAWSWLFCGITGGEVSFFFFPVSDDVIPNTNPKNCQCYLYHSTNSQLEPLEVFHLHKLHSAVFTSRRDPSFADDLFESSKPCLNQLLSYFSDITAFRSMDVVADIAFVCSPNFLTLKWNSSLFDDDLARLLFFMINSKITNYDLPFSILNSPCSDLCLNSSSLANYLHGCFYHNTLSHPYQDALKFIYEIGDDLEDTFRSFSFLELHSLAIKLSKLVTCKNEVVPIMVSHSPALFVGILAILYSGNAYCPIDVETRTERVHFISKDVDASFAIVSEEFVNRFPNNTIILKVPEYNESMEIKVDDEIPPFPFPESLDSVAYVLYTSGSTGNPKGVAISHRAATNSIKSHGYLYPMFGLERGDAWLQFANVTFDVSVFEIFGNWNNGLTLVTSKRQNLIGNLEYLIYDYKIAALELTPTVANVISLDENKELFTSVRMLITIGELLTNRIIDFWGERLVNAYGPTEAAIHVTLNPSKALTTVYLVGVPLQSATICVVSLPTEDSQPHVLHEGFLGEVCIAGPQLSSGYINRPEINAKAFVEVQYNEQTLSIYRTGDLGRIINGKLYIFGRIAGDMQIKIRGRRIEIGEIESKLAPSVDSLAIEKIGDNLVAFYVGDEMKLRKHAESHLASWMCPTKYVGLPGFPRLASGKTDRKALKIQFSASDKHSTDFSSFNQSELLVANVLHEICEKRFNSVVSISRFSSIFDLGLDSLDIVYFVRKIRSLGFEANPSIVLTSKVVFKIAESLILLKPNEVQSKNNFLNKCTPLQKGMLYESFSNNGNLYFNHTVFKIAASPEKVKLAWEKLLDTHTILSNGFALDENEGFTRFILEKKPPLYSYSKNCLECIQKHFTTKEFDEQFLNSGPLDAAVIYDSSNCYLSIVWHHALYDGWSIDIIMQQLFMLIHDRRLTIVPQFEDYVQELESLRRLNYKNCISFWKKYLKDFKFKSLSYQREKMGVVELSSNISLLSVENICKQLQTTPLSFFLTAWSTVLSSYLKTNDFLVGTVVSGRVNSLLPNVDYVIGPCMQTLPVRIKLDDELSYKNLCQNLFKELSFVLKHSVMAISDFQEELLVSNLFESILIYQQSGIPSVDESFISLIHSTDHVEQPLLIEIEKNKGYKFKLTGYLSSELLNNLLNDFDKILNFILYNIESKIQTHASFNVTITEHNHVESKARTGFSKREEKLVRSCLSKILGNTVLSADVFENLQNYGFDSLCAMRFFSLLRKSSGIGNLKIPNMKSNPTIASLCELLVLPTETLSADNEITFYEVSDIQHEANLDIESFQYFPCTPMQQALLASSEKNGVEYYYNKYLFETGKSSQEEIYLLFKTLLNNLPILRTCFFVTRSKKYPYCQVVLNEPNFYFQVLPYKGESLSKYNLAEIPLLDSKKVPIQIFFLQGENKNYVLFCIHHVLYDAWAFQLIMDDINHLLRKENPKGSQSMLKFISYLHRYNKNVDLEIWSKIFLGFKPSKFPELCKDINPEQRTYKCNLSISLSQIDDLCNGFSFTTSTFLQCCWAKTLSFLLNSRDICFGNIISGRDVPVDEVVSLVAPTFNSFPLRVLLDSKLSFAEVCGQLQRLKETLQEHQMTSVQSICKSLTVKSLFDTVFIIQPQLLSDRTGPWKLLNESSSMDMRFIIELLLGSDDSPLTLVGTGTGKSGKLVCNLYKTILKHYVHYGLSTSVPLYTSLEKHNLISRSPSSPPPIHTNFDTNADIITLFEKEANEHPSSIALHFVYNVDKENIYSYKFFSEYSIKASYWLHSIGIKKNDVVAVFIDKSLDYYSLMLGVLRIGAFFFPLEHCSSLNFAKENLLRTNVKLLIVDKFLPFEDVNQVEIDKFRQVVDKLPTVEIPNESRSSAFIFPSYELAEGLTMMESSSFMDSIISFIDSTCFPSSSRWFQYAPSSTACQMFDCFMCWFFGCTLISGPQLFLKNNLKPLLLATHASHLITTSSIAASLKGEDIPSIQRLYCYEGPINNYMIKSWGSRLSYIYAFKPLICSCVPATEYLESNIMMVGIPLKGLIFAVVNSDTNTLAPIGSSGELCIASVKKSGNTMMDSQRVFTFENRSYYRTGDIVRILAGGEFEYIKKKSFIFIDSMPLDIEGKINVDKLRDLLNDDNYIFKVDNDEFPKNDNILDGFQEKVILTISDFASIPFEKLSLNTKLSTIGIDSISAIQLSKDLREIFHLRISALDILNSSTINSLIRKLKRRRTESHTRNDKIHESIDQFFKDIRKQILIPQTLCDKIEQILPCLASQCSMLSRFYTNGGKDYLNYSVFHLQKYNDPLLLRSSWENVISNVSILRTKFQTTKHKRSPFCQVTYSKVDIPWSMELHAASVEKVLNEYLELQRRDLLQGKNVLPYSLIFVRTFSQETFLIIIMHHALYDESSLRKILGLVEKSLNSPIGKFNHEPIVRQIELLKANYEEAKAFWIKQLLSFQPTNFPSLTACRIDNEDRMLTKKPCALNYTNLTKWCNAHDVTLQVLGQLVWAKILASYCAENYAVFGTVLSGKSVLTDVDDNIFPTVTTIPCVVKLQGTVEDCLRQLQKFNLDANKFQFTSLLDIKKWLNLGPSEKLFSSLFSIYVDNDIPLKLFNDECKAQGFIEFPVALEMRFSESTSELTLNSAVNYIPQAHASLILDQFNAILTTIFNNPLQQIEILENSLPTQLLSIKPAIVGDYPTEIKYLHQFVEYFAQKSPNSCALEFALDINQDSVQLIRLTYSELNERANKLAHNLKSYGFRVGSIIAVYFDKCIEAFISMLAILKAGCCFLALDVSAPTERIRYIVTDSTAVLVMSTGELYTKLLNASINVTILDASDPGNYSNNIENPYTKDFEDSNLAYVLYTSGSTGKPKGCCLTHHNVVQCMLAFQDQFAGEWDTNSRFLAFASFHFDVSVLEQYFSWSTGITLVAAPQSLILQDLPTAISALKITHVDLTPSLASILTPKTAPLLRVFITGGEQIKQELLNIWGDTRVLYNFWGPTELTIGASAFRKVPKNAKVSNIGPPFPNCSTYILSKETKVPVLLGGLGEICMGGNQVAKGYLNLPEQTDAKFYFDRRFNDRIYHTGDLGRLLKDNNSLEFCGRTDDQIKLRGQRIEIGEINAVIKSSSEKILGVYTLAVVHPVLRKQQLVAFIHVKGISASHLIVHDHKDPSLIGFINSACKASLAKYMVPSFYVFISSVPLTPTNKFDKKKVIEEFSRLSLGQLSSFAPAREENDNEGSNVVEPKLLKIIADFSDVKVTDISPQTSVFELGLDSISAVALSGLLRKSGYDNANPSLILTSSTISNLGFALNTQTNEELEDSIKVNSIIKLPSCSQFPFHQYIELINPCLPLVEGLLFELERSNNENYYNSFFFLFEKREQADQFINNFKLLRKQYEVLRSSFLKSDGEYFQVVWKSDFIAEVDVLNNDSLIKTVRYSLKCEKGFFLVTVTLFHGIYDGWSLDLLLNDLARLCSRKTLAPRPRYSKIVRQLLINTSLKKDTKEYWLNLFRSKNIYVPIFQGKLDMAITLGHKLSISSAKLSTICRSVLKASVNSALLTSWICFLNSIGAINCVGIVVSGRSEISMDCLEVMGPLFNTIPFPLFLEKDESFDCLVRRCQLTLASMIPYHQTSLREIKKWLRRSELFNVLFTYNLHPSVIKQCEFPWSFSSESTDTGYPLALEIEEDVDGTMNLHLSSNFKYIGQTEIIGLLDSYDCYLSSLLETSNAKISSRPNVLMPNQPEVKQYIPNVWNDVLKKLITILSPKVIITKLDFERDTFVHEFGIDSIDLIWLASKVSEAGIGKLDIGLLMEKPTFYRILQLLCETSANHSTSLKHEFGTLNTLLSKYLTDQDAEDCYPATPIQSGLLLETMNQKNLYQNDVLFSLDAEISLEKLQNSWKRLCQKNAILRTHFAISEDSSEPMVIQIVDKFEARSCLNQIKILPSRFTNIEDTLRFLRHDEEAKRFLDPFKNPPYYVQFFEIGAKNYMFVQMHHSLYDGWSLSLMYDELMQLYRDEQGNSRKPFKDYIIQLYSLKYDYDFWFKYFENLSIPKPLPFLSNNGKFMSSMMSTVSLPSVRLACQLYGVSIQSLVFFTWGYYIASVLNCPDIVFHTVLSGRTYIEGAETVMGPCMNTIPVRIKFEGALQTLKKTSRMLINLAKQQHTPLSWIYKTYGNVAAIPMESILVYQHLPDSSQSETFLNVVTDNSAVDYPIAIQFEIQGDTLNWLTSLDLARVDGDVANQLLQTIDKIFSNLTKGSFEKLTFNFSNFVKYRQYQINLKDFRENLLLTEEAISDCDLLIIDERVLVVFILFPEPDAKFPYLVLNEEIIRMLKSYIKKFRLTLSSAMVPDILVPVSYLPRSLDHSENEGKLLNIYNSISADNLKILSAVHEIHLNETEKILLEGFSKIICLPQDSVDISNNFFQLGMDSIRSIHLCSYLRNKGLNVSVSDILQHSSIEKLAHYLQYEKKESSSSFDIASFQLDEYLNTLPSNIPINLVQKILPCSAGQMYALNAWYNTEKKKYFHTFFYTTEEKIELLKLKLAWAKLVKSSDILRTTFIRSSSPCYPLLQIVLKSFECPWEHYITDNLHDTCLKIQKRELVTNTTLQEVPLRIATIETSGKFVFCLTIHHALYDGWSLDIMINYLSKMYYDDSLTIVQQNSQLFLSTVLDPAVGLSRKKFWNNYLTNYKPYTFLEKPSASQEITLFFPKLFSLDTVYSSVRSRGLTVQSVSFAVFARLLANEVKQEDVVFGIYVSGRTLDVDNIDELLFPTFNVVPLRVTDTFRPLGEIALEIQSFLNEISGNLQYISLLDLPVHGMMDIAVNFLSTGDNNEPSKVFSVYPLKLNNAELKINEVETTIDGCEILFGNKPKLDFELAIRDGYLEIGLFCQSSIFSKREASVFINNFVTIIKEIEL.

4 consecutive Carrier domains span residues 715 to 791 (NQSE…ILLK), 2172 to 2246 (DGFQ…KRRR), 3254 to 3328 (NVVE…NTQT), and 4402 to 4478 (IHLN…QYEK). O-(pantetheine 4'-phosphoryl)serine occurs at positions 752, 2206, 3288, and 4439.

This sequence belongs to the ATP-dependent AMP-binding enzyme family.

Its subcellular location is the cytoplasm. Its function is as follows. Involved in intracellular and extracellular ferrichrome siderophore biosynthesis. The chain is Hydroxamate-type ferrichrome siderophore peptide synthetase (sib1) from Schizosaccharomyces pombe (strain 972 / ATCC 24843) (Fission yeast).